The chain runs to 186 residues: MTLLVGLGNPTLRYDHTRHNAGFDILDSLVSELDLSFIFSPKHNAYLCVYKDFILLKPQTYMNLSGESVLSAKNFYKTKELLIVHDDLDLPLGVVKFKKGGGNGGHNGLKSIDALCSNSYYRLRVGISKGINITEHVLSKFHNNEEPLKNAAFEHAKNALKFFIESHDFNATQNRFTLKKPLQIES.

Residue Y14 participates in tRNA binding. H19 (proton acceptor) is an active-site residue. TRNA-binding residues include Y61, N63, and N107.

The protein belongs to the PTH family. As to quaternary structure, monomer.

It is found in the cytoplasm. The enzyme catalyses an N-acyl-L-alpha-aminoacyl-tRNA + H2O = an N-acyl-L-amino acid + a tRNA + H(+). In terms of biological role, hydrolyzes ribosome-free peptidyl-tRNAs (with 1 or more amino acids incorporated), which drop off the ribosome during protein synthesis, or as a result of ribosome stalling. Functionally, catalyzes the release of premature peptidyl moieties from peptidyl-tRNA molecules trapped in stalled 50S ribosomal subunits, and thus maintains levels of free tRNAs and 50S ribosomes. In Helicobacter pylori (strain J99 / ATCC 700824) (Campylobacter pylori J99), this protein is Peptidyl-tRNA hydrolase.